Reading from the N-terminus, the 102-residue chain is Small ribosomal subunit protein uS10 (102 aa).

It belongs to the universal ribosomal protein uS10 family. As to quaternary structure, part of the 30S ribosomal subunit.

In terms of biological role, involved in the binding of tRNA to the ribosomes. The protein is Small ribosomal subunit protein uS10 of Mesoplasma florum (strain ATCC 33453 / NBRC 100688 / NCTC 11704 / L1) (Acholeplasma florum).